The chain runs to 308 residues: Sulfate adenylyltransferase subunit 2 (308 aa).

The protein belongs to the PAPS reductase family. CysD subfamily. In terms of assembly, heterodimer composed of CysD, the smaller subunit, and CysN.

The catalysed reaction is sulfate + ATP + H(+) = adenosine 5'-phosphosulfate + diphosphate. Its pathway is sulfur metabolism; hydrogen sulfide biosynthesis; sulfite from sulfate: step 1/3. Functionally, with CysN forms the ATP sulfurylase (ATPS) that catalyzes the adenylation of sulfate producing adenosine 5'-phosphosulfate (APS) and diphosphate, the first enzymatic step in sulfur assimilation pathway. APS synthesis involves the formation of a high-energy phosphoric-sulfuric acid anhydride bond driven by GTP hydrolysis by CysN coupled to ATP hydrolysis by CysD. The chain is Sulfate adenylyltransferase subunit 2 from Chromobacterium violaceum (strain ATCC 12472 / DSM 30191 / JCM 1249 / CCUG 213 / NBRC 12614 / NCIMB 9131 / NCTC 9757 / MK).